The sequence spans 329 residues: Fructose-1,6-bisphosphatase class 1 (329 aa).

Residues E84, D103, L105, and D106 each coordinate Mg(2+). Residues 106 to 109 (DGSS), N196, and K262 each bind substrate. Residue E268 participates in Mg(2+) binding.

This sequence belongs to the FBPase class 1 family. Homotetramer. Mg(2+) is required as a cofactor.

The protein resides in the cytoplasm. The enzyme catalyses beta-D-fructose 1,6-bisphosphate + H2O = beta-D-fructose 6-phosphate + phosphate. It functions in the pathway carbohydrate biosynthesis; gluconeogenesis. This is Fructose-1,6-bisphosphatase class 1 from Shewanella halifaxensis (strain HAW-EB4).